The following is a 551-amino-acid chain: Glucose-6-phosphate isomerase (551 aa).

The Proton donor role is filled by E356. Active-site residues include H387 and K515.

It belongs to the GPI family.

It localises to the cytoplasm. It catalyses the reaction alpha-D-glucose 6-phosphate = beta-D-fructose 6-phosphate. Its pathway is carbohydrate biosynthesis; gluconeogenesis. The protein operates within carbohydrate degradation; glycolysis; D-glyceraldehyde 3-phosphate and glycerone phosphate from D-glucose: step 2/4. In terms of biological role, catalyzes the reversible isomerization of glucose-6-phosphate to fructose-6-phosphate. This is Glucose-6-phosphate isomerase from Blochmanniella pennsylvanica (strain BPEN).